Here is a 302-residue protein sequence, read N- to C-terminus: Oxaloacetate decarboxylase 2 (302 aa).

Position 50 (S50) interacts with substrate. Residue D88 coordinates Mg(2+). Positions 159 and 235 each coordinate substrate.

It belongs to the isocitrate lyase/PEP mutase superfamily. Oxaloacetate decarboxylase family. Homotetramer; dimer of dimers. Mg(2+) is required as a cofactor.

The catalysed reaction is oxaloacetate + H(+) = pyruvate + CO2. Functionally, catalyzes the decarboxylation of oxaloacetate into pyruvate. Seems to play a role in maintaining cellular concentrations of bicarbonate and pyruvate. The protein is Oxaloacetate decarboxylase 2 of Pseudomonas putida (strain W619).